A 596-amino-acid polypeptide reads, in one-letter code: Elongation factor 4 (596 aa).

A tr-type G domain is found at 2–184 (KHIRNFSIIA…EIVAKIPPPV (183 aa)). Residues 14–19 (DHGKST) and 131–134 (NKID) contribute to the GTP site.

This sequence belongs to the TRAFAC class translation factor GTPase superfamily. Classic translation factor GTPase family. LepA subfamily.

It is found in the cell inner membrane. The enzyme catalyses GTP + H2O = GDP + phosphate + H(+). In terms of biological role, required for accurate and efficient protein synthesis under certain stress conditions. May act as a fidelity factor of the translation reaction, by catalyzing a one-codon backward translocation of tRNAs on improperly translocated ribosomes. Back-translocation proceeds from a post-translocation (POST) complex to a pre-translocation (PRE) complex, thus giving elongation factor G a second chance to translocate the tRNAs correctly. Binds to ribosomes in a GTP-dependent manner. This chain is Elongation factor 4, found in Shewanella denitrificans (strain OS217 / ATCC BAA-1090 / DSM 15013).